A 207-amino-acid chain; its full sequence is LexA repressor (207 aa).

Positions 28–48 form a DNA-binding region, H-T-H motif; the sequence is VREIGEAVGLASSSTVHGHLS. Catalysis depends on for autocatalytic cleavage activity residues Ser-130 and Lys-168.

Belongs to the peptidase S24 family. Homodimer.

It catalyses the reaction Hydrolysis of Ala-|-Gly bond in repressor LexA.. In terms of biological role, represses a number of genes involved in the response to DNA damage (SOS response), including recA and lexA. In the presence of single-stranded DNA, RecA interacts with LexA causing an autocatalytic cleavage which disrupts the DNA-binding part of LexA, leading to derepression of the SOS regulon and eventually DNA repair. This chain is LexA repressor, found in Staphylococcus haemolyticus (strain JCSC1435).